Here is a 345-residue protein sequence, read N- to C-terminus: Very-long-chain 3-oxoacyl-CoA reductase (345 aa).

Residues 26-46 (GAAVLLATGGLFLASRVLTFV) traverse the membrane as a helical segment. Val-71, Asp-125, Asp-133, Asn-152, Tyr-219, Lys-223, Ile-252, and Ser-254 together coordinate NADP(+). Tyr-219 acts as the Proton donor in catalysis. Residue Lys-223 is the Lowers pKa of active site Tyr of the active site.

It belongs to the short-chain dehydrogenases/reductases (SDR) family.

It localises to the endoplasmic reticulum membrane. The catalysed reaction is a very-long-chain (3R)-3-hydroxyacyl-CoA + NADP(+) = a very-long-chain 3-oxoacyl-CoA + NADPH + H(+). Its pathway is lipid metabolism; fatty acid biosynthesis. In terms of biological role, component of the microsomal membrane bound fatty acid elongation system, which produces the 26-carbon very long-chain fatty acids (VLCFA) from palmitate. Catalyzes the reduction of the 3-ketoacyl-CoA intermediate that is formed in each cycle of fatty acid elongation. VLCFAs serve as precursors for ceramide and sphingolipids. The protein is Very-long-chain 3-oxoacyl-CoA reductase of Aspergillus clavatus (strain ATCC 1007 / CBS 513.65 / DSM 816 / NCTC 3887 / NRRL 1 / QM 1276 / 107).